The sequence spans 456 residues: Chromosomal replication initiator protein DnaA (456 aa).

A domain I, interacts with DnaA modulators region spans residues 1-83 (MKLKILHFTS…DAFEEESNNG (83 aa)). Positions 83–116 (GVRPEIHIKVKEKKENVKSLKNNKSMLYFNTNGL) are domain II. Residues 117-331 (SLNPFYTFEN…GILSTINAHI (215 aa)) form a domain III, AAA+ region region. Positions 161, 163, 164, and 165 each coordinate ATP. The tract at residues 332 to 456 (NLSPESSSLK…SKIQQSLDSV (125 aa)) is domain IV, binds dsDNA.

Belongs to the DnaA family. In terms of assembly, oligomerizes as a right-handed, spiral filament on DNA at oriC.

It localises to the cytoplasm. Functionally, plays an essential role in the initiation and regulation of chromosomal replication. ATP-DnaA binds to the origin of replication (oriC) to initiate formation of the DNA replication initiation complex once per cell cycle. Binds the DnaA box (a 9 base pair repeat at the origin) and separates the double-stranded (ds)DNA. Forms a right-handed helical filament on oriC DNA; dsDNA binds to the exterior of the filament while single-stranded (ss)DNA is stabiized in the filament's interior. The ATP-DnaA-oriC complex binds and stabilizes one strand of the AT-rich DNA unwinding element (DUE), permitting loading of DNA polymerase. After initiation quickly degrades to an ADP-DnaA complex that is not apt for DNA replication. Binds acidic phospholipids. This is Chromosomal replication initiator protein DnaA from Helicobacter hepaticus (strain ATCC 51449 / 3B1).